Consider the following 513-residue polypeptide: 2-isopropylmalate synthase (513 aa).

A Pyruvate carboxyltransferase domain is found at Leu5–Val268. Mn(2+) is bound by residues Asp14, His202, His204, and Asn239. The regulatory domain stretch occupies residues Arg394–Gly513.

Belongs to the alpha-IPM synthase/homocitrate synthase family. LeuA type 1 subfamily. As to quaternary structure, homodimer. Mn(2+) serves as cofactor.

The protein resides in the cytoplasm. It catalyses the reaction 3-methyl-2-oxobutanoate + acetyl-CoA + H2O = (2S)-2-isopropylmalate + CoA + H(+). The protein operates within amino-acid biosynthesis; L-leucine biosynthesis; L-leucine from 3-methyl-2-oxobutanoate: step 1/4. Functionally, catalyzes the condensation of the acetyl group of acetyl-CoA with 3-methyl-2-oxobutanoate (2-ketoisovalerate) to form 3-carboxy-3-hydroxy-4-methylpentanoate (2-isopropylmalate). In Leptothrix cholodnii (strain ATCC 51168 / LMG 8142 / SP-6) (Leptothrix discophora (strain SP-6)), this protein is 2-isopropylmalate synthase.